An 87-amino-acid chain; its full sequence is Defensin-like protein 223 (87 aa).

The signal sequence occupies residues 1–34; sequence MKSTIFVLTLLIFVSLYFNIIVYVSFSFIGTSEI. 3 disulfide bridges follow: Cys55–Cys72, Cys58–Cys77, and Cys62–Cys79.

This sequence belongs to the DEFL family.

The protein localises to the secreted. This Arabidopsis thaliana (Mouse-ear cress) protein is Defensin-like protein 223.